The primary structure comprises 266 residues: MKNSIKNIFESERGLLLLPFVSLGTPNTQINKQAIIAMDKNGANIIELGIPYSDPVADGPVIQDAYNKAIKNGVNIRKAFKILMNLKGKIKSPIIVFIYYNQLLNYGINKFLEKLIQLEVQGIIVPDLPYDESQILKKKCTINNIALISLIALTSSFSRIKKIARNAEGFLYLISKTGVTGGTGKLMNKLKIIIKTIQKLTSKPVVVGFGINSRRQIKQLIEWNSNGIVIGSPCVQILLQSSKEVCVIKLSGLIKQIKESTSSTSN.

Catalysis depends on proton acceptor residues E47 and D58.

It belongs to the TrpA family. As to quaternary structure, tetramer of two alpha and two beta chains.

The protein localises to the plastid. Its subcellular location is the chloroplast. It catalyses the reaction (1S,2R)-1-C-(indol-3-yl)glycerol 3-phosphate + L-serine = D-glyceraldehyde 3-phosphate + L-tryptophan + H2O. The protein operates within amino-acid biosynthesis; L-tryptophan biosynthesis; L-tryptophan from chorismate: step 5/5. Its function is as follows. The alpha subunit is responsible for the aldol cleavage of indoleglycerol phosphate to indole and glyceraldehyde 3-phosphate. This Cyanidium caldarium (Red alga) protein is Tryptophan synthase alpha chain.